We begin with the raw amino-acid sequence, 1129 residues long: MSSSRPASSSSSRNRQSSRARVLAQTTLDAELNAEYEESGDSFDYSKLVEAQRDGPPVQQGRSEKVIAYLQHIQKGKLIQTFGCMLALDEKSFNVIAFSENAPEMLTTVSHAVPSVDDPPRLGIGTNVRSLFSDQGATALHKALGFADVSLLNPILVQCKTSGKPFYAIVHRATGCLVVDFEPVKPTEFPATAAGALQSYKLAAKAISKIQSLPGGSMEVLCNTVVKEVFDLTGYDRVMAYKFHEDDHGEVFAEITKPGLEPYLGLHYPATDIPQAARFLFMKNKVRMICDCRARSIKVIEAEALPFDISLCGSALRAPHSCHLQYMENMNSIASLVMAVVVNENEEDDEAESEQPAQQQQKKKLWGLLVCHHESPRYVPFPLRYACEFLAQVFAVHVNREFELEKQLREKSILKMQTMLSDMLFREASPLTIVSGAPNIMDLVKCDGAALLYGGKVWRLRNAPTESQIHDIAFWLSDVHRDSTGLSTDSLHDAGYPGASALGDMICGMAVAKINSKDIIFWFRSHTAAEIRWGGAKHDSSDMDDSRRMHPRLSFKAFLEVVKMKSLPWTDYEMDAIHSLQLILRGTLNDASKPKREASLDNQIGDLKLDGLAELQAVTSEMVRLMETATVPILAVDGNGLVNGWNQKAAELTGLRVDDAIGRHILTLVEESSVPVVQRMLYLALQGKEEKEVRFEVKTHGPRRDDGPVILVVNACASRDLHDHVVGVCFVAQDMTVHKLVMDKFTRVEGDYKAIIHNPNPLIPPIFGADEFGWCSEWNAAMTKLTGWNRDEVLDKMLLGEVFDSSNASCPLKNKNAFVSLCVLINSALAGEETEKAPFGFFDRSGKYIECLLSANRKENEGGLITGVFCFIHVASHELQHALQVQQASEQTSLKRLKAFSYMRHAINNPLSGMLYSRKALKNTDLNEEQMKQIHVGDNCHHQINKILADLDQDSISEKSSCLDLEMAEFVFQDVVVAAVSQVLITCQGKGIRISCNLPERFMKQSVYGDGVRLQQILSDFLFISVKFSPVGGSVEISSKLTKNSIGENLHLIDLELRIKHQGLGVPAELMEQMFEEDNKEQSDEGLGLLVSRKLLRLMNGDVRHLREAGVSTFILTAELASAPTAIGQ.

The segment covering 1–21 has biased composition (low complexity); that stretch reads MSSSRPASSSSSRNRQSSRAR. The interval 1–24 is disordered; that stretch reads MSSSRPASSSSSRNRQSSRARVLA. The region spanning 217 to 402 is the GAF domain; it reads SMEVLCNTVV…VFAVHVNREF (186 aa). Cys-322 is a phytochromobilin binding site. 2 PAS domains span residues 618–688 and 748–822; these read VTSE…LQGK and VEGD…VSLC. The region spanning 902-1122 is the Histidine kinase domain; sequence YMRHAINNPL…TFILTAELAS (221 aa).

This sequence belongs to the phytochrome family. Homodimer. Post-translationally, contains one covalently linked phytochromobilin chromophore.

Regulatory photoreceptor which exists in two forms that are reversibly interconvertible by light: the Pr form that absorbs maximally in the red region of the spectrum and the Pfr form that absorbs maximally in the far-red region. Photoconversion of Pr to Pfr induces an array of morphogenic responses, whereas reconversion of Pfr to Pr cancels the induction of those responses. Pfr controls the expression of a number of nuclear genes including those encoding the small subunit of ribulose-bisphosphate carboxylase, chlorophyll A/B binding protein, protochlorophyllide reductase, rRNA, etc. It also controls the expression of its own gene(s) in a negative feedback fashion. The sequence is that of Phytochrome A type 4 (PHYA4) from Avena sativa (Oat).